Consider the following 236-residue polypeptide: MKFEQPLQSATLLKRYKRFLADVVTANGEEFTLHCANTGAMTGCATPGDTVWYSTSSNVKRKYPHSWELTQTQSGDWICINTLRANTIIADAIEAGDIPELSDYDEIRREVKYGSENSRIDILLKSNHKVDCYIEVKSVTLLDAGMGYFPDAKTERGQKHLRELTAIAKSGLRAILFYAVPHTGITQVSVAKEIDPKYDLLLKQACDAGVEILCYRINISEYDLTIGKQLPFISKG.

This sequence belongs to the SfsA family.

This is Sugar fermentation stimulation protein homolog from Proteus mirabilis (strain HI4320).